Here is a 79-residue protein sequence, read N- to C-terminus: Putative membrane protein insertion efficiency factor (79 aa).

The protein belongs to the UPF0161 family.

Its subcellular location is the cell inner membrane. Its function is as follows. Could be involved in insertion of integral membrane proteins into the membrane. This Thermotoga neapolitana (strain ATCC 49049 / DSM 4359 / NBRC 107923 / NS-E) protein is Putative membrane protein insertion efficiency factor.